The sequence spans 412 residues: Circumsporozoite protein (412 aa).

A signal peptide spans 1 to 18; the sequence is MMRKLAILSVSSFLFVEA. The interval 69–328 is disordered; the sequence is SRSLGENDDG…KNNNNEEPSD (260 aa). Positions 85-105 are enriched in basic and acidic residues; it reads NGREGKDEDKRDGNNEDNEKL. The tract at residues 104-111 is required for the binding to heparan sulfate proteoglycans (HSPGs) on the surface of host hepatocytes; the sequence is KLRKPKHK. The tract at residues 112–116 is region I; contains the proteolytic cleavage site; the sequence is KLKQP. Low complexity predominate over residues 120–288; the sequence is NPDPNANPNV…PNANPNANPN (169 aa). A run of 41 repeats spans residues 123–126, 127–130, 131–134, 135–138, 139–142, 143–146, 147–150, 151–154, 155–158, 159–162, 163–166, 167–170, 171–174, 175–178, 179–182, 183–186, 187–190, 191–194, 195–198, 199–202, 203–206, 207–210, 211–214, 215–218, 219–222, 223–226, 227–230, 231–234, 235–238, 239–242, 243–246, 247–250, 251–254, 255–258, 259–262, 263–266, 267–270, 271–274, 275–278, 279–282, and 283–286. The tract at residues 123–286 is 41 X 4 AA tandem repeats of P-N-[AV]-[ND]; the sequence is PNANPNVDPN…ANPNANPNAN (164 aa). Polar residues predominate over residues 289-304; the sequence is KNNQGNGQGHNMPNDP. A compositionally biased stretch (low complexity) spans 310–324; sequence ENANANNAVKNNNNE. Positions 337–390 constitute a TSP type-1 domain; the sequence is KIKNSISTEWSPCSVTCGNGIQVRIKPGSANKPKDELDYENDIEKKICKMEKCS. Intrachain disulfides connect Cys-349-Cys-384 and Cys-353-Cys-389. Thr-352 is a glycosylation site (O-linked (Fuc) threonine). Residue Cys-389 is the site of GPI-anchor amidated cysteine attachment. Residues 390–412 constitute a propeptide, removed in mature form; it reads SSVFNVVNSSIGLIMVLSFLFLN.

Belongs to the plasmodium circumsporozoite protein family. In terms of processing, during host cell invasion, proteolytically cleaved at the cell membrane in the region I by a papain-like cysteine protease of parasite origin. Cleavage is triggered by the sporozoite contact with highly sulfated heparan sulfate proteoglycans (HSPGs) present on the host hepatocyte cell surface. Cleavage exposes the TSP type-1 (TSR) domain and is required for productive invasion of host hepatocytes but not for adhesion to the host cell membrane. Cleavage is dispensable for sporozoite development in the oocyst, motility and for traversal of host and vector cells. O-glycosylated; maybe by POFUT2.

The protein localises to the cell membrane. The protein resides in the cytoplasm. In terms of biological role, essential sporozoite protein. In the mosquito vector, required for sporozoite development in the oocyst, migration through the vector hemolymph and entry into the vector salivary glands. In the vertebrate host, required for sporozoite migration through the host dermis and infection of host hepatocytes. Binds to highly sulfated heparan sulfate proteoglycans (HSPGs) on the surface of host hepatocytes. Functionally, in the vertebrate host, binds to highly sulfated heparan sulfate proteoglycans (HSPGs) on the surface of host hepatocytes and is required for sporozoite invasion of the host hepatocytes. The protein is Circumsporozoite protein of Plasmodium falciparum.